The chain runs to 178 residues: PRA1 family protein 2 (178 aa).

Residues 1–41 lie on the Cytoplasmic side of the membrane; the sequence is MSEVRLPPLRALDDFVLGSARLAAPDPCDPQRWCHRVINNL. Residues 42–62 traverse the membrane as a helical segment; that stretch reads LYYQTNYLLCFGIGLALAGYV. Residues 63–64 lie on the Extracellular side of the membrane; it reads RP. The chain crosses the membrane as a helical span at residues 65-85; sequence LHTLLSALVVAVALGVLVWAA. Over 86–96 the chain is Cytoplasmic; that stretch reads ETRAAVRRCRR. A helical membrane pass occupies residues 97-119; sequence SHPAACLAAVLAVGLLVLWVAGG. The Extracellular portion of the chain corresponds to 120–122; sequence ACT. A helical membrane pass occupies residues 123-140; sequence FLFSIAGPVLLILVHASL. The Cytoplasmic segment spans residues 141-178; the sequence is RLRNLKNKIENKIESIGLKRTPMGLLLEALGQEQEAGS.

The protein belongs to the PRA1 family. As to quaternary structure, interacts with CCR5 and GDE1. As to expression, strong expression in the brain, small intestine, lung, spleen, and pancreas as well as in tumor tissues of the breast, colon, lung and ovary, with a weaker expression in normal tissues of the same patient. High expression in neuroblastic tumors. Strongly expressed in Purkinje cells and more moderately in cells of the molecular and the granular layers in the cerebellum. Detected in neuronal cells, but not in non-neuronal cells in the cerebral cortex, hippocampus, and lateral ventricles.

The protein resides in the endosome membrane. Its function is as follows. May be involved in ER/Golgi transport and vesicular traffic. Plays a proapoptotic role in cerulenin-induced neuroblastoma apoptosis. This chain is PRA1 family protein 2 (PRAF2), found in Homo sapiens (Human).